The following is a 55-amino-acid chain: Large ribosomal subunit protein bL33 (55 aa).

It belongs to the bacterial ribosomal protein bL33 family.

The protein is Large ribosomal subunit protein bL33 of Bordetella avium (strain 197N).